Consider the following 489-residue polypeptide: Cytochrome P450 2C70 (489 aa).

The first 27 residues, 1 to 27, serve as a signal peptide directing secretion; sequence MALFIFLGIWLSCLVFLFLWNQHHVRR. C434 serves as a coordination point for heme.

It belongs to the cytochrome P450 family. Heme serves as cofactor.

It is found in the endoplasmic reticulum membrane. The protein localises to the microsome membrane. The enzyme catalyses chenodeoxycholate + reduced [NADPH--hemoprotein reductase] + O2 = alpha-muricholate + oxidized [NADPH--hemoprotein reductase] + H2O + H(+). It catalyses the reaction ursodeoxycholate + reduced [NADPH--hemoprotein reductase] + O2 = beta-muricholate + oxidized [NADPH--hemoprotein reductase] + H2O + H(+). Its function is as follows. A cytochrome P450 monooxygenase involved in muricholic acid (MCA) synthesis. Hydroxylates at the 6-beta position two major bile acids, chenodeoxycholic acid (CDCA) and ursodeoxycholic acid (UDCA) to form alpha-MCA and beta-MCA, respectively. May regulate NR1H4/farnesoid X receptor signaling, as taurine-conjugated MCAs are antagonists of NR1H4. Mechanistically, uses molecular oxygen inserting one oxygen atom into a substrate, and reducing the second into a water molecule, with two electrons provided by NADPH via cytochrome P450 reductase (CPR; NADPH-ferrihemoprotein reductase). The chain is Cytochrome P450 2C70 from Rattus norvegicus (Rat).